Consider the following 93-residue polypeptide: Large ribosomal subunit protein uL23 (93 aa).

This sequence belongs to the universal ribosomal protein uL23 family. Part of the 50S ribosomal subunit. Contacts protein L29, and trigger factor when it is bound to the ribosome.

One of the early assembly proteins it binds 23S rRNA. One of the proteins that surrounds the polypeptide exit tunnel on the outside of the ribosome. Forms the main docking site for trigger factor binding to the ribosome. In Campylobacter lari (strain RM2100 / D67 / ATCC BAA-1060), this protein is Large ribosomal subunit protein uL23.